Consider the following 431-residue polypeptide: Adenylosuccinate synthetase (431 aa).

GTP contacts are provided by residues 12–18 (GDEGKGK) and 40–42 (GHT). The active-site Proton acceptor is the aspartate 13. 2 residues coordinate Mg(2+): aspartate 13 and glycine 40. IMP-binding positions include 13-16 (DEGK), 38-41 (NAGH), threonine 131, arginine 145, glutamine 225, threonine 240, and arginine 304. Residue histidine 41 is the Proton donor of the active site. 300 to 306 (VNTGRRR) lines the substrate pocket. GTP contacts are provided by residues arginine 306, 332–334 (KLD), and 414–416 (STS).

Belongs to the adenylosuccinate synthetase family. As to quaternary structure, homodimer. Requires Mg(2+) as cofactor.

The protein localises to the cytoplasm. It catalyses the reaction IMP + L-aspartate + GTP = N(6)-(1,2-dicarboxyethyl)-AMP + GDP + phosphate + 2 H(+). The protein operates within purine metabolism; AMP biosynthesis via de novo pathway; AMP from IMP: step 1/2. Its function is as follows. Plays an important role in the de novo pathway of purine nucleotide biosynthesis. Catalyzes the first committed step in the biosynthesis of AMP from IMP. This is Adenylosuccinate synthetase from Beijerinckia indica subsp. indica (strain ATCC 9039 / DSM 1715 / NCIMB 8712).